Here is a 159-residue protein sequence, read N- to C-terminus: Ornithine decarboxylase antizyme (159 aa).

Belongs to the ODC antizyme family. As to quaternary structure, interacts with ODC1 and thereby sterically blocks ODC homodimerization.

Ornithine decarboxylase (ODC) antizyme protein that negatively regulates ODC activity and intracellular polyamine biosynthesis and uptake in response to increased intracellular polyamine levels. Binds to ODC monomers, inhibiting the assembly of the functional ODC homodimer, and targets the monomers for ubiquitin-independent proteolytic destruction by the 26S proteasome. This chain is Ornithine decarboxylase antizyme, found in Caenorhabditis elegans.